We begin with the raw amino-acid sequence, 147 residues long: Diaminohydroxyphosphoribosylamino-pyrimidine deaminase (147 aa).

The region spanning 1-123 (MNDIFYMKRA…YLKKHGICVK (123 aa)) is the CMP/dCMP-type deaminase domain. Zn(2+) is bound at residue H50. E52 acts as the Proton donor in catalysis. C75 and C84 together coordinate Zn(2+).

It belongs to the cytidine and deoxycytidylate deaminase family. Zn(2+) serves as cofactor.

It carries out the reaction 2,5-diamino-6-hydroxy-4-(5-phosphoribosylamino)-pyrimidine + H2O + H(+) = 5-amino-6-(5-phospho-D-ribosylamino)uracil + NH4(+). It functions in the pathway cofactor biosynthesis; riboflavin biosynthesis; 5-amino-6-(D-ribitylamino)uracil from GTP: step 2/4. This chain is Diaminohydroxyphosphoribosylamino-pyrimidine deaminase (ribD1), found in Buchnera aphidicola subsp. Acyrthosiphon pisum (strain APS) (Acyrthosiphon pisum symbiotic bacterium).